The chain runs to 86 residues: Beta-toxin CsEI (86 aa).

The signal sequence occupies residues 1-19 (MNSLLMITACLVLIGTVWA). The LCN-type CS-alpha/beta domain maps to 20-84 (KDGYLVEKTG…TWPLPNKTCG (65 aa)). Intrachain disulfides connect cysteine 30/cysteine 83, cysteine 34/cysteine 59, cysteine 43/cysteine 64, and cysteine 47/cysteine 66. At cysteine 83 the chain carries Cysteine amide.

It belongs to the long (4 C-C) scorpion toxin superfamily. Sodium channel inhibitor family. Beta subfamily. In terms of tissue distribution, expressed by the venom gland.

The protein resides in the secreted. In terms of biological role, beta toxins bind voltage-independently at site-4 of sodium channels (Nav) and shift the voltage of activation toward more negative potentials thereby affecting sodium channel activation and promoting spontaneous and repetitive firing. Affects channels from chicken and frog. In Centruroides sculpturatus (Arizona bark scorpion), this protein is Beta-toxin CsEI.